The sequence spans 327 residues: Tetraacyldisaccharide 4'-kinase (327 aa).

ATP is bound at residue 52–59 (TLGGAGKT).

It belongs to the LpxK family.

It catalyses the reaction a lipid A disaccharide + ATP = a lipid IVA + ADP + H(+). It functions in the pathway glycolipid biosynthesis; lipid IV(A) biosynthesis; lipid IV(A) from (3R)-3-hydroxytetradecanoyl-[acyl-carrier-protein] and UDP-N-acetyl-alpha-D-glucosamine: step 6/6. Its function is as follows. Transfers the gamma-phosphate of ATP to the 4'-position of a tetraacyldisaccharide 1-phosphate intermediate (termed DS-1-P) to form tetraacyldisaccharide 1,4'-bis-phosphate (lipid IVA). The chain is Tetraacyldisaccharide 4'-kinase from Methylorubrum populi (strain ATCC BAA-705 / NCIMB 13946 / BJ001) (Methylobacterium populi).